Reading from the N-terminus, the 570-residue chain is DNA polymerase/3'-5' exonuclease PolX (570 aa).

The DNA polymerase type-X stretch occupies residues 1 to 315 (MHKKDIIRLL…PLIPPEIRES (315 aa)). The a divalent metal cation site is built by D193, D195, and D240. The interval 333-570 (QIKGDLHMHS…DVEAFLKRND (238 aa)) is 3'-5' exonuclease. Mn(2+) contacts are provided by H339, H341, H371, E410, H437, H465, D526, and H528.

This sequence in the N-terminal section; belongs to the DNA polymerase type-X family. The protein in the C-terminal section; belongs to the PHP family. In terms of assembly, monomer. It depends on Mn(2+) as a cofactor. The cofactor is Mg(2+).

It carries out the reaction DNA(n) + a 2'-deoxyribonucleoside 5'-triphosphate = DNA(n+1) + diphosphate. The catalysed reaction is Exonucleolytic cleavage in the 3'- to 5'-direction to yield nucleoside 5'-phosphates.. With respect to regulation, the polymerization activity is inhibited in the presence of 2'-3'-dideoxynucleoside 5'-triphosphate (ddNTP). Its function is as follows. Strictly DNA-template-directed DNA polymerase, preferentially acting on DNA structures containing gaps from one to a few nucleotides and bearing a phosphate group at the 5' end of the downstream DNA. The fact that PolX is able to conduct filling of a single-nucleotide gap, allowing further sealing of the resulting nick by a DNA ligase, points to a putative role in base excision repair (BER) during the B.subtilis life cycle. Moreover, also possesses a 3'-5' exonuclease activity able to edit unpaired 3'-termini in a gapped DNA substrate and likely involved in resecting unannealed 3'-termini during DNA repair. The same PolX molecule could perform the subsequent gap-filling step. Does not display 5'-deoxyribose 5'-phosphate (dRP) lyase activity, as predicted by the lack of the lysine and tyrosine residues responsible for the dRP lyase activity in some other PolX members. This Bacillus subtilis (strain 168) protein is DNA polymerase/3'-5' exonuclease PolX (polX).